Here is a 455-residue protein sequence, read N- to C-terminus: Epoxide hydrolase 1 (455 aa).

Residues Met-1 to Arg-21 form a helical; Signal-anchor for type III membrane protein membrane-spanning segment. The Cytoplasmic segment spans residues Asp-22–Gln-455. The active-site Nucleophile is the Asp-226. Dimethylated arginine is present on Arg-295. The active-site Proton donor is the Tyr-374. The active-site Proton acceptor is the His-431. An N6-acetyllysine modification is found at Lys-439.

It belongs to the peptidase S33 family.

It is found in the microsome membrane. Its subcellular location is the endoplasmic reticulum membrane. The enzyme catalyses cis-stilbene oxide + H2O = (1R,2R)-hydrobenzoin. The catalysed reaction is 1-(4-methoxyphenyl)-N-methyl-N-[(3-methyloxetan-3-yl)methyl]methanamine + H2O = 2-{[(4-methoxybenzyl)(methyl)amino]methyl}-2-methylpropane-1,3-diol. It carries out the reaction 8,9-epoxy-(5Z,11Z,14Z)-eicosatrienoate + H2O = 8,9-dihydroxy-(5Z,11Z,14Z)-eicosatrienoate. It catalyses the reaction 11,12-epoxy-(5Z,8Z,14Z)-eicosatrienoate + H2O = 11,12-dihydroxy-(5Z,8Z,14Z)-eicosatrienoate. The enzyme catalyses 2-(5Z,8Z,11Z,14Z-eicosatetraenoyl)-glycerol + H2O = glycerol + (5Z,8Z,11Z,14Z)-eicosatetraenoate + H(+). Inhibited by 10-hydroxystearamide and methoxy-arachidonyl fluorophosphate. In terms of biological role, biotransformation enzyme that catalyzes the hydrolysis of arene and aliphatic epoxides to less reactive and more water soluble dihydrodiols by the trans addition of water. May play a role in the metabolism of endogenous lipids such as epoxide-containing fatty acids. Metabolizes the abundant endocannabinoid 2-arachidonoylglycerol (2-AG) to free arachidonic acid (AA) and glycerol. Binds 20(S)-hydroxycholesterol (20(S)-OHC). The protein is Epoxide hydrolase 1 of Mus musculus (Mouse).